A 335-amino-acid chain; its full sequence is MKITRMHGAGGKVMQELIKDVILKNLEITSVNGGIGLESLDDSATIPIGDKEIVFTVDGHTVKPIFFPGGDIGRLAVSGTVNDLAVMGAKPLALSLSLIIPEGFNLEDLEKIVKSINETSKEAEVAIITGDTKVSDGVDDIIISTAGIGIVDRGKAIRDCNVQEGDAIIVSGNIGEHGLAILLSREGFDFETNIKSDVAPINKLIERVLEEGIQINAMKDPTRGGLADALNEMAEKSNIGITIFEDKIPISDEVQSICDILGLDPLTIANEGKVVMAVKKEDAERCLEILREHPLGKNAEIIGYATKEHKGVIIETIVGRRIVDMPIGDPIPRVC.

The protein belongs to the HypE family.

The chain is Putative hydrogenase expression/formation protein MJ0676 from Methanocaldococcus jannaschii (strain ATCC 43067 / DSM 2661 / JAL-1 / JCM 10045 / NBRC 100440) (Methanococcus jannaschii).